A 144-amino-acid chain; its full sequence is MPPKKKKLAGLIKLQIQAGQANPAPPVGPALGQHGVNIMEFCKAYNAATESQRGNVVPVEISVYEDRTFDFKLKTPPAAKLLLKAAGVQKGSGEPHKTKVASVTMDQVREIAKTKQEDLNANDIEQAAKIIAGTARSMGITVDG.

It belongs to the universal ribosomal protein uL11 family. As to quaternary structure, part of the ribosomal stalk of the 50S ribosomal subunit. Interacts with L10 and the large rRNA to form the base of the stalk. L10 forms an elongated spine to which L12 dimers bind in a sequential fashion forming a multimeric L10(L12)X complex. Post-translationally, one or more lysine residues are methylated.

Functionally, forms part of the ribosomal stalk which helps the ribosome interact with GTP-bound translation factors. This chain is Large ribosomal subunit protein uL11, found in Rhodococcus opacus (strain B4).